The primary structure comprises 434 residues: ATP-dependent protease ATPase subunit HslU (434 aa).

ATP contacts are provided by residues I18, 60–65, D247, E312, and R384; that span reads GVGKTE.

Belongs to the ClpX chaperone family. HslU subfamily. In terms of assembly, a double ring-shaped homohexamer of HslV is capped on each side by a ring-shaped HslU homohexamer. The assembly of the HslU/HslV complex is dependent on binding of ATP.

The protein resides in the cytoplasm. Functionally, ATPase subunit of a proteasome-like degradation complex; this subunit has chaperone activity. The binding of ATP and its subsequent hydrolysis by HslU are essential for unfolding of protein substrates subsequently hydrolyzed by HslV. HslU recognizes the N-terminal part of its protein substrates and unfolds these before they are guided to HslV for hydrolysis. This Brucella anthropi (strain ATCC 49188 / DSM 6882 / CCUG 24695 / JCM 21032 / LMG 3331 / NBRC 15819 / NCTC 12168 / Alc 37) (Ochrobactrum anthropi) protein is ATP-dependent protease ATPase subunit HslU.